The chain runs to 540 residues: Decreased expression in renal and prostate cancer protein (540 aa).

A compositionally biased stretch (basic and acidic residues) spans 1–12 (MKEPRIFPRERP). Disordered stretches follow at residues 1-264 (MKEP…DARA) and 304-389 (SQAS…AFSQ). Low complexity-rich tracts occupy residues 113–125 (PRPG…SPGS) and 180–192 (GPSL…LTPG). The span at 304 to 316 (SQASGNMGTSPSS) shows a compositional bias: polar residues. Ser-313 is modified (phosphoserine). The segment covering 321 to 330 (PGPIGPNSGP) has biased composition (low complexity). Position 375 is an asymmetric dimethylarginine (Arg-375). Arg-403 is subject to Omega-N-methylarginine. Residue Ser-439 is modified to Phosphoserine. Residues 516–540 (GTNPAAFPRPGGPMAAMYPNGMLPP) are disordered.

This sequence belongs to the DERPC family.

Its subcellular location is the nucleus. Potential tumor suppressor. In Bos taurus (Bovine), this protein is Decreased expression in renal and prostate cancer protein.